The primary structure comprises 576 residues: Proline--tRNA ligase (576 aa).

Belongs to the class-II aminoacyl-tRNA synthetase family. ProS type 1 subfamily. In terms of assembly, homodimer.

Its subcellular location is the cytoplasm. It catalyses the reaction tRNA(Pro) + L-proline + ATP = L-prolyl-tRNA(Pro) + AMP + diphosphate. In terms of biological role, catalyzes the attachment of proline to tRNA(Pro) in a two-step reaction: proline is first activated by ATP to form Pro-AMP and then transferred to the acceptor end of tRNA(Pro). As ProRS can inadvertently accommodate and process non-cognate amino acids such as alanine and cysteine, to avoid such errors it has two additional distinct editing activities against alanine. One activity is designated as 'pretransfer' editing and involves the tRNA(Pro)-independent hydrolysis of activated Ala-AMP. The other activity is designated 'posttransfer' editing and involves deacylation of mischarged Ala-tRNA(Pro). The misacylated Cys-tRNA(Pro) is not edited by ProRS. This is Proline--tRNA ligase from Bordetella petrii (strain ATCC BAA-461 / DSM 12804 / CCUG 43448).